We begin with the raw amino-acid sequence, 296 residues long: Sulfate adenylyltransferase subunit 2 (296 aa).

This sequence belongs to the PAPS reductase family. CysD subfamily. Heterodimer composed of CysD, the smaller subunit, and CysN.

The enzyme catalyses sulfate + ATP + H(+) = adenosine 5'-phosphosulfate + diphosphate. Its pathway is sulfur metabolism; hydrogen sulfide biosynthesis; sulfite from sulfate: step 1/3. In terms of biological role, with CysN forms the ATP sulfurylase (ATPS) that catalyzes the adenylation of sulfate producing adenosine 5'-phosphosulfate (APS) and diphosphate, the first enzymatic step in sulfur assimilation pathway. APS synthesis involves the formation of a high-energy phosphoric-sulfuric acid anhydride bond driven by GTP hydrolysis by CysN coupled to ATP hydrolysis by CysD. The polypeptide is Sulfate adenylyltransferase subunit 2 (Rhodospirillum rubrum (strain ATCC 11170 / ATH 1.1.1 / DSM 467 / LMG 4362 / NCIMB 8255 / S1)).